The following is a 532-amino-acid chain: 2,3-bisphosphoglycerate-independent phosphoglycerate mutase (532 aa).

Aspartate 15 and serine 65 together coordinate Mn(2+). Residue serine 65 is the Phosphoserine intermediate of the active site. Residues histidine 126, 156–157 (RD), arginine 188, arginine 194, 258–261 (RPDR), and lysine 331 each bind substrate. Mn(2+)-binding residues include aspartate 398, histidine 402, aspartate 439, histidine 440, and histidine 457.

Belongs to the BPG-independent phosphoglycerate mutase family. In terms of assembly, monomer. Mn(2+) is required as a cofactor.

It catalyses the reaction (2R)-2-phosphoglycerate = (2R)-3-phosphoglycerate. It participates in carbohydrate degradation; glycolysis; pyruvate from D-glyceraldehyde 3-phosphate: step 3/5. Catalyzes the interconversion of 2-phosphoglycerate and 3-phosphoglycerate. This Nostoc punctiforme (strain ATCC 29133 / PCC 73102) protein is 2,3-bisphosphoglycerate-independent phosphoglycerate mutase.